The primary structure comprises 208 residues: Small ribosomal subunit protein uS5 (208 aa).

Positions 1–15 (MTDSNNQSPNKKTSG) are enriched in polar residues. Residues 1–54 (MTDSNNQSPNKKTSGSSSAPPAADGRQENRRSRGEKRGGRRDRRGQERDSEWQE) are disordered. Basic and acidic residues-rich tracts occupy residues 25–37 (GRQENRRSRGEKR) and 44–54 (RGQERDSEWQE). The S5 DRBM domain occupies 52 to 115 (WQERVVQIRR…ADGKKHLVRV (64 aa)).

It belongs to the universal ribosomal protein uS5 family. Part of the 30S ribosomal subunit. Contacts proteins S4 and S8.

In terms of biological role, with S4 and S12 plays an important role in translational accuracy. Functionally, located at the back of the 30S subunit body where it stabilizes the conformation of the head with respect to the body. This chain is Small ribosomal subunit protein uS5, found in Prochlorococcus marinus (strain NATL2A).